Reading from the N-terminus, the 282-residue chain is sn-glycerol-3-phosphate transport system permease protein UgpE (282 aa).

A run of 6 helical transmembrane segments spans residues 14–34 (LILILGIIIVAFPIYYTFVAS), 86–106 (MAIAVGKIIISFMSAFAIVFF), 112–132 (MFFFWMIFITLMLPVEVRILP), 146–168 (YAGLTLPLMASATATFLFRQFFL), 201–221 (IAALFVILSIYGWTQYLWPLL), and 248–268 (WNYVMVTAILAIIPPILVVVL). The ABC transmembrane type-1 domain occupies 78–269 (LWNSFVVAMA…IPPILVVVLM (192 aa)).

Belongs to the binding-protein-dependent transport system permease family. The complex is composed of two ATP-binding proteins (UgpC), two transmembrane proteins (UgpA and UgpE) and a solute-binding protein (UgpB).

It localises to the cell inner membrane. Its function is as follows. Part of the ABC transporter complex UgpBAEC involved in sn-glycerol-3-phosphate (G3P) import. Probably responsible for the translocation of the substrate across the membrane. The sequence is that of sn-glycerol-3-phosphate transport system permease protein UgpE (ugpE) from Brucella suis biovar 1 (strain 1330).